The primary structure comprises 768 residues: Photosystem I P700 chlorophyll a apoprotein A1 (768 aa).

Transmembrane regions (helical) follow at residues 76 to 99, 162 to 185, 201 to 225, 310 to 328, 369 to 392, 408 to 434, 456 to 478, and 559 to 577; these read VFSA…FHGA, LMAL…YHYH, LNHH…HIGA, ISHH…GHLY, WHAQ…HHMY, LGLF…IAMI, ALIS…LYIH, and FMIH…LILL. Residues C601 and C610 each contribute to the [4Fe-4S] cluster site. 2 consecutive transmembrane segments (helical) span residues 617 to 638 and 682 to 704; these read HVFL…HFSW and ISMY…MFLF. H693 serves as a coordination point for divinylchlorophyll a'. Divinyl chlorophyll a contacts are provided by M701 and Y709. W710 contacts phylloquinone. The helical transmembrane segment at 742–762 threads the bilayer; sequence AVGAAHFLLGGIATTWAFFHA.

This sequence belongs to the PsaA/PsaB family. As to quaternary structure, the PsaA/B heterodimer binds the P700 divinyl chlorophyll special pair and subsequent electron acceptors. PSI consists of a core antenna complex that captures photons, and an electron transfer chain that converts photonic excitation into a charge separation. The cyanobacterial PSI reaction center is composed of one copy each of PsaA,B,C,D,E,F,I,J,K,L,M and X, and forms trimeric complexes. Requires PSI electron transfer chain: 5 divinyl chlorophyll a, 1 divinyl chlorophyll a', 2 phylloquinones and 3 4Fe-4S clusters. PSI core antenna: 90 divinyl chlorophyll a, 22 carotenoids, 3 phospholipids and 1 galactolipid. P700 is a divinyl chlorophyll a/divinyl chlorophyll a' dimer, A0 is one or more divinyl chlorophyll a, A1 is one or both phylloquinones and FX is a shared 4Fe-4S iron-sulfur center. as cofactor.

It localises to the cellular thylakoid membrane. It catalyses the reaction reduced [plastocyanin] + hnu + oxidized [2Fe-2S]-[ferredoxin] = oxidized [plastocyanin] + reduced [2Fe-2S]-[ferredoxin]. Its function is as follows. PsaA and PsaB bind P700, the primary electron donor of photosystem I (PSI), as well as the electron acceptors A0, A1 and FX. PSI is a plastocyanin/cytochrome c6-ferredoxin oxidoreductase, converting photonic excitation into a charge separation, which transfers an electron from the donor P700 chlorophyll pair to the spectroscopically characterized acceptors A0, A1, FX, FA and FB in turn. Oxidized P700 is reduced on the lumenal side of the thylakoid membrane by plastocyanin or cytochrome c6. The chain is Photosystem I P700 chlorophyll a apoprotein A1 from Prochlorococcus marinus (strain NATL2A).